The following is a 429-amino-acid chain: Adenylosuccinate synthetase (429 aa).

GTP-binding positions include 12-18 (GDEGKGK) and 40-42 (GHT). The active-site Proton acceptor is the D13. D13 and G40 together coordinate Mg(2+). Residues 13–16 (DEGK), 38–41 (NAGH), T129, R143, Q223, T238, and R302 each bind IMP. Catalysis depends on H41, which acts as the Proton donor. Residue 298 to 304 (VVTGRKR) participates in substrate binding. Residues R304, 330–332 (KLD), and 412–414 (STS) each bind GTP.

The protein belongs to the adenylosuccinate synthetase family. In terms of assembly, homodimer. Requires Mg(2+) as cofactor.

It is found in the cytoplasm. It carries out the reaction IMP + L-aspartate + GTP = N(6)-(1,2-dicarboxyethyl)-AMP + GDP + phosphate + 2 H(+). It functions in the pathway purine metabolism; AMP biosynthesis via de novo pathway; AMP from IMP: step 1/2. In terms of biological role, plays an important role in the de novo pathway of purine nucleotide biosynthesis. Catalyzes the first committed step in the biosynthesis of AMP from IMP. The sequence is that of Adenylosuccinate synthetase from Brucella anthropi (strain ATCC 49188 / DSM 6882 / CCUG 24695 / JCM 21032 / LMG 3331 / NBRC 15819 / NCTC 12168 / Alc 37) (Ochrobactrum anthropi).